Reading from the N-terminus, the 229-residue chain is Cytidylate kinase (229 aa).

Position 12-20 (12-20 (GPSGSGKGT)) interacts with ATP.

This sequence belongs to the cytidylate kinase family. Type 1 subfamily.

Its subcellular location is the cytoplasm. It catalyses the reaction CMP + ATP = CDP + ADP. The catalysed reaction is dCMP + ATP = dCDP + ADP. The sequence is that of Cytidylate kinase from Stutzerimonas stutzeri (strain A1501) (Pseudomonas stutzeri).